Reading from the N-terminus, the 365-residue chain is MNAKEFLIELLKFKSVTPNDDGALNFIAMELSDFEAFFIEKEGIKNLLLTKKFNDEGEHLAFGGHVDVVPAGEGWKNDPFEPLEEEGFIYARGAQDMKSGVAAFIDAVKDVSFKGRRLSLILTSDEEGEAKYGTKAVLEWMKEKNMLPDYAVVAEPTCVKKMGDSIKIGRRGSINGKLLIRGKQGHVAYPEKCINPVHDFAPVLKLLAGFDLDPGSAEFSPSKIVITDIRGGMGVCNVTPNDLKLMFNVRNSPDTSLEDVKSYVEKICHGLNYELELKQSSEAFLTNIDNKIVQKMNESVQKITHEVPELNTKGGTSDARYFAKYGVKVVEFGVCNDRIHAIDERVSIEEFEKLCLVFKDLIENF.

Residue His65 participates in Zn(2+) binding. Asp67 is a catalytic residue. Asp96 contacts Zn(2+). Glu126 (proton acceptor) is an active-site residue. Residues Glu127, Glu155, and His340 each coordinate Zn(2+).

Belongs to the peptidase M20A family. DapE subfamily. As to quaternary structure, homodimer. Zn(2+) is required as a cofactor. Co(2+) serves as cofactor.

The catalysed reaction is N-succinyl-(2S,6S)-2,6-diaminopimelate + H2O = (2S,6S)-2,6-diaminopimelate + succinate. The protein operates within amino-acid biosynthesis; L-lysine biosynthesis via DAP pathway; LL-2,6-diaminopimelate from (S)-tetrahydrodipicolinate (succinylase route): step 3/3. Catalyzes the hydrolysis of N-succinyl-L,L-diaminopimelic acid (SDAP), forming succinate and LL-2,6-diaminopimelate (DAP), an intermediate involved in the bacterial biosynthesis of lysine and meso-diaminopimelic acid, an essential component of bacterial cell walls. This is Succinyl-diaminopimelate desuccinylase from Campylobacter jejuni subsp. jejuni serotype O:6 (strain 81116 / NCTC 11828).